The chain runs to 320 residues: ATP-dependent 6-phosphofructokinase (320 aa).

G12 provides a ligand contact to ATP. ADP-binding positions include 22 to 26 and 55 to 60; these read RGVVR and RYSVSD. ATP contacts are provided by residues 73–74 and 103–106; these read RF and GDGS. A Mg(2+)-binding site is contributed by D104. 126 to 128 provides a ligand contact to substrate; that stretch reads TID. Residue D128 is the Proton acceptor of the active site. ADP is bound at residue R155. Substrate-binding positions include R163 and 170-172; that span reads MGR. ADP-binding positions include 186 to 188, K212, and 214 to 216; these read GCE and KKH. Substrate is bound by residues E223, R244, and 250 to 253; that span reads HIQR.

The protein belongs to the phosphofructokinase type A (PFKA) family. ATP-dependent PFK group I subfamily. Prokaryotic clade 'B1' sub-subfamily. As to quaternary structure, homotetramer. It depends on Mg(2+) as a cofactor.

It localises to the cytoplasm. It catalyses the reaction beta-D-fructose 6-phosphate + ATP = beta-D-fructose 1,6-bisphosphate + ADP + H(+). It participates in carbohydrate degradation; glycolysis; D-glyceraldehyde 3-phosphate and glycerone phosphate from D-glucose: step 3/4. Its activity is regulated as follows. Allosterically activated by ADP and other diphosphonucleosides, and allosterically inhibited by phosphoenolpyruvate. Functionally, catalyzes the phosphorylation of D-fructose 6-phosphate to fructose 1,6-bisphosphate by ATP, the first committing step of glycolysis. In Cronobacter sakazakii (strain ATCC BAA-894) (Enterobacter sakazakii), this protein is ATP-dependent 6-phosphofructokinase.